Reading from the N-terminus, the 87-residue chain is Phosphocarrier protein HPr (87 aa).

In terms of domain architecture, HPr spans 1 to 87 (MASKDFHIVA…AETMTKEGLA (87 aa)). His15 acts as the Pros-phosphohistidine intermediate in catalysis. Ser46 bears the Phosphoserine; by HPrK/P mark.

The protein belongs to the HPr family.

Its subcellular location is the cytoplasm. Phosphorylation on Ser-46 inhibits the phosphoryl transfer from enzyme I to HPr. Its function is as follows. General (non sugar-specific) component of the phosphoenolpyruvate-dependent sugar phosphotransferase system (sugar PTS). This major carbohydrate active-transport system catalyzes the phosphorylation of incoming sugar substrates concomitantly with their translocation across the cell membrane. The phosphoryl group from phosphoenolpyruvate (PEP) is transferred to the phosphoryl carrier protein HPr by enzyme I. Phospho-HPr then transfers it to the PTS EIIA domain. P-Ser-HPr interacts with the catabolite control protein A (CcpA), forming a complex that binds to DNA at the catabolite response elements cre, operator sites preceding a large number of catabolite-regulated genes. Thus, P-Ser-HPr is a corepressor in carbon catabolite repression (CCR), a mechanism that allows bacteria to coordinate and optimize the utilization of available carbon sources. P-Ser-HPr also plays a role in inducer exclusion, in which it probably interacts with several non-PTS permeases and inhibits their transport activity. The protein is Phosphocarrier protein HPr (ptsH) of Streptococcus salivarius.